We begin with the raw amino-acid sequence, 50 residues long: Large ribosomal subunit protein bL32c (50 aa).

Belongs to the bacterial ribosomal protein bL32 family.

The protein localises to the plastid. This chain is Large ribosomal subunit protein bL32c (rpl32), found in Euglena longa (Euglenophycean alga).